Here is a 281-residue protein sequence, read N- to C-terminus: Probable short-chain type dehydrogenase/reductase blr2146 (281 aa).

NAD(+) is bound at residue 10–34 (VVTGAGAGIGKACALAIAREGGRVV). Serine 146 lines the substrate pocket. Tyrosine 159 functions as the Proton acceptor in the catalytic mechanism. The segment at 261-281 (GNSRAARPAGETAEADAAPRC) is disordered.

The protein belongs to the short-chain dehydrogenases/reductases (SDR) family.

This chain is Probable short-chain type dehydrogenase/reductase blr2146, found in Bradyrhizobium diazoefficiens (strain JCM 10833 / BCRC 13528 / IAM 13628 / NBRC 14792 / USDA 110).